Reading from the N-terminus, the 315-residue chain is CID domain-containing protein 1 (315 aa).

The region spanning 1 to 135 (MADFTEQTLR…RLHEVHQQVK (135 aa)) is the CID domain. The stretch at 227 to 273 (MLEEYVKRLKNETNERETLESNLNMLIENVRMSIEHHEKLCREVKRR) forms a coiled coil.

The polypeptide is CID domain-containing protein 1 (cids-1) (Caenorhabditis elegans).